A 288-amino-acid chain; its full sequence is Transmembrane protein 163 (288 aa).

Positions 1–64 (MEPALGSERR…ESGQFSDGLE (64 aa)) are disordered. Topologically, residues 1-87 (MEPALGSERR…HEAQNYRKKA (87 aa)) are cytoplasmic. S11 is subject to Phosphoserine. A compositionally biased stretch (pro residues) spans 12–24 (PPGPGVPRPPPRG). A compositionally biased stretch (low complexity) spans 25–42 (HAPSTAAPAPSPAPMSSS). Positions 41–71 (SSVQSDEERQPRISESGQFSDGLEDRGLLES) are required for interaction with MCOLN1. S45, S54, S56, and S60 each carry phosphoserine. The chain crosses the membrane as a helical span at residues 88-108 (LWVSWLSIIVTLALAVAAFTV). Topologically, residues 109 to 115 (SVMRYSA) are extracellular. A helical transmembrane segment spans residues 116-136 (SAFGFAFDAILDVLSSAIVLW). The Cytoplasmic segment spans residues 137–149 (RYSNAAAVHSANR). The helical transmembrane segment at 150–170 (EYIACVILGVIFLLSSICIVV) threads the bilayer. The Extracellular segment spans residues 171-186 (KAIHDLSTRLLPEVDD). The helical transmembrane segment at 187 to 207 (FLFSVSILSGILCSVLAVLKF) threads the bilayer. Topologically, residues 208–216 (MLGKVLTSR) are cytoplasmic. Residues 217 to 237 (ALITDGFNSLVGGVMGFSILL) form a helical membrane-spanning segment. The Extracellular segment spans residues 238-254 (SAEVFKHNAAVWYLDGS). Residues 255–275 (IGVLIGLTIFAYGVKLLIDMV) traverse the membrane as a helical segment. The Cytoplasmic segment spans residues 276–288 (PRVRQTRHYEMFE).

The protein belongs to the TMEM163 family. As to quaternary structure, homodimer. Interacts with MCOLN1. Interacts with SLC30A1, SLC30A2, SLC30A3 and SLC30A4. As to expression, widely expressed, with high expression in the brain, cerebellum, heart, lung and spleen. In the brain, mainly expressed in the glutaminergic neuron subpopulations.

Its subcellular location is the cytoplasmic vesicle. It is found in the secretory vesicle. The protein localises to the synaptic vesicle membrane. It localises to the early endosome membrane. The protein resides in the late endosome membrane. Its subcellular location is the lysosome membrane. It is found in the cell membrane. It carries out the reaction Zn(2+)(in) = Zn(2+)(out). Its function is as follows. Zinc ion transporter that mediates zinc efflux and plays a crucial role in intracellular zinc homeostasis. Binds the divalent cations Zn(2+), Ni(2+), and to a minor extent Cu(2+). Is a functional modulator of P2X purinoceptors, including P2RX1, P2RX3, P2RX4 and P2RX7. Plays a role in central nervous system development and is required for myelination, and survival and proliferation of oligodendrocytes. This Mus musculus (Mouse) protein is Transmembrane protein 163 (Tmem163).